Reading from the N-terminus, the 96-residue chain is Aspartyl/glutamyl-tRNA(Asn/Gln) amidotransferase subunit C (96 aa).

It belongs to the GatC family. Heterotrimer of A, B and C subunits.

The enzyme catalyses L-glutamyl-tRNA(Gln) + L-glutamine + ATP + H2O = L-glutaminyl-tRNA(Gln) + L-glutamate + ADP + phosphate + H(+). It carries out the reaction L-aspartyl-tRNA(Asn) + L-glutamine + ATP + H2O = L-asparaginyl-tRNA(Asn) + L-glutamate + ADP + phosphate + 2 H(+). In terms of biological role, allows the formation of correctly charged Asn-tRNA(Asn) or Gln-tRNA(Gln) through the transamidation of misacylated Asp-tRNA(Asn) or Glu-tRNA(Gln) in organisms which lack either or both of asparaginyl-tRNA or glutaminyl-tRNA synthetases. The reaction takes place in the presence of glutamine and ATP through an activated phospho-Asp-tRNA(Asn) or phospho-Glu-tRNA(Gln). This Oceanobacillus iheyensis (strain DSM 14371 / CIP 107618 / JCM 11309 / KCTC 3954 / HTE831) protein is Aspartyl/glutamyl-tRNA(Asn/Gln) amidotransferase subunit C.